Consider the following 101-residue polypeptide: MSDNDVAAKRLTKPKLERPKLYKVLLVNDDFTPREFVVMVLKAVFRMSEEAGYRVMMTAHKMGISVVVVCAKDVAETKAKEATDLGKEAGFPLLFTAEPEE.

It belongs to the ClpS family. In terms of assembly, binds to the N-terminal domain of the chaperone ClpA.

Involved in the modulation of the specificity of the ClpAP-mediated ATP-dependent protein degradation. The polypeptide is ATP-dependent Clp protease adapter protein ClpS 2 (Rhizobium meliloti (strain 1021) (Ensifer meliloti)).